The primary structure comprises 589 residues: DNA ligase (589 aa).

Position 250 (glutamate 250) interacts with ATP. Residue lysine 252 is the N6-AMP-lysine intermediate of the active site. ATP contacts are provided by arginine 257, arginine 272, glutamate 302, phenylalanine 342, arginine 417, and lysine 423.

It belongs to the ATP-dependent DNA ligase family. Requires Mg(2+) as cofactor.

It catalyses the reaction ATP + (deoxyribonucleotide)n-3'-hydroxyl + 5'-phospho-(deoxyribonucleotide)m = (deoxyribonucleotide)n+m + AMP + diphosphate.. Its function is as follows. DNA ligase that seals nicks in double-stranded DNA during DNA replication, DNA recombination and DNA repair. The chain is DNA ligase from Cenarchaeum symbiosum (strain A).